Here is a 1786-residue protein sequence, read N- to C-terminus: Protein TIC 214 (1786 aa).

The next 6 membrane-spanning stretches (helical) occupy residues 19 to 39 (IINS…FSIG), 68 to 88 (FIAG…HLAL), 91 to 111 (PHTI…WNNH), 133 to 153 (VFLN…SSML), 176 to 196 (VGWL…LVWI), and 227 to 247 (IFSI…PSPI). Residues 1007–1046 (SLSEKKIKNLIDRKKTIRNQIEEISKEKQNLTNSCTKLRY) adopt a coiled-coil conformation.

The protein belongs to the TIC214 family. As to quaternary structure, part of the Tic complex. Component of the 1-MD complex, composed of TIC20-I, TIC214, TIC100 and TIC56. Interacts with the translocating preproteins. Hydrolysis of ATP is essential for the formation of this complex. The 1-MD complex interacts with TIC21.

The protein localises to the plastid. The protein resides in the chloroplast inner membrane. Its function is as follows. Involved in protein precursor import into chloroplasts. May be part of an intermediate translocation complex acting as a protein-conducting channel at the inner envelope. This is Protein TIC 214 from Arabidopsis thaliana (Mouse-ear cress).